The sequence spans 229 residues: Large ribosomal subunit protein uL1 (229 aa).

It belongs to the universal ribosomal protein uL1 family. Part of the 50S ribosomal subunit.

Binds directly to 23S rRNA. The L1 stalk is quite mobile in the ribosome, and is involved in E site tRNA release. In terms of biological role, protein L1 is also a translational repressor protein, it controls the translation of the L11 operon by binding to its mRNA. This Clostridium botulinum (strain 657 / Type Ba4) protein is Large ribosomal subunit protein uL1.